A 950-amino-acid polypeptide reads, in one-letter code: Glycine dehydrogenase (decarboxylating) (950 aa).

K699 bears the N6-(pyridoxal phosphate)lysine mark.

The protein belongs to the GcvP family. In terms of assembly, the glycine cleavage system is composed of four proteins: P, T, L and H. The cofactor is pyridoxal 5'-phosphate.

The catalysed reaction is N(6)-[(R)-lipoyl]-L-lysyl-[glycine-cleavage complex H protein] + glycine + H(+) = N(6)-[(R)-S(8)-aminomethyldihydrolipoyl]-L-lysyl-[glycine-cleavage complex H protein] + CO2. Functionally, the glycine cleavage system catalyzes the degradation of glycine. The P protein binds the alpha-amino group of glycine through its pyridoxal phosphate cofactor; CO(2) is released and the remaining methylamine moiety is then transferred to the lipoamide cofactor of the H protein. The polypeptide is Glycine dehydrogenase (decarboxylating) (Chromobacterium violaceum (strain ATCC 12472 / DSM 30191 / JCM 1249 / CCUG 213 / NBRC 12614 / NCIMB 9131 / NCTC 9757 / MK)).